We begin with the raw amino-acid sequence, 639 residues long: Complex I assembly factor Egm, mitochondrial (639 aa).

A mitochondrion-targeting transit peptide spans 1–26; sequence MRPNLFSGASRLLTYSRNGKLLTRGR. The interval 23-65 is disordered; the sequence is TRGRSTKATSSSLDSQHQDAATTEGGRAESVEESPEQQRKLPT. The segment covering 28–43 has biased composition (polar residues); that stretch reads TKATSSSLDSQHQDAA. A compositionally biased stretch (basic and acidic residues) spans 48 to 65; sequence GRAESVEESPEQQRKLPT.

It belongs to the acyl-CoA dehydrogenase family. Associates with mitochondrial complex I assembly intermediates during its biogenesis. It depends on FAD as a cofactor.

It localises to the mitochondrion. In terms of biological role, as part of the MCIA complex, primarily participates in the assembly of the mitochondrial complex I and therefore plays a role in oxidative phosphorylation. This chain is Complex I assembly factor Egm, mitochondrial, found in Drosophila melanogaster (Fruit fly).